The following is a 747-amino-acid chain: Threonine synthase-like 1 (747 aa).

Lysine 351 carries the post-translational modification N6-(pyridoxal phosphate)lysine.

It belongs to the threonine synthase family. Requires pyridoxal 5'-phosphate as cofactor.

The chain is Threonine synthase-like 1 (Thnsl1) from Mus musculus (Mouse).